A 195-amino-acid chain; its full sequence is Pyridoxal 5'-phosphate synthase subunit PdxT (195 aa).

46–48 is a binding site for L-glutamine; it reads GES. C78 serves as the catalytic Nucleophile. L-glutamine-binding positions include R107 and 136 to 137; that span reads IR. Catalysis depends on charge relay system residues H173 and E175.

The protein belongs to the glutaminase PdxT/SNO family. In terms of assembly, in the presence of PdxS, forms a dodecamer of heterodimers. Only shows activity in the heterodimer.

It carries out the reaction aldehydo-D-ribose 5-phosphate + D-glyceraldehyde 3-phosphate + L-glutamine = pyridoxal 5'-phosphate + L-glutamate + phosphate + 3 H2O + H(+). The enzyme catalyses L-glutamine + H2O = L-glutamate + NH4(+). It participates in cofactor biosynthesis; pyridoxal 5'-phosphate biosynthesis. In terms of biological role, catalyzes the hydrolysis of glutamine to glutamate and ammonia as part of the biosynthesis of pyridoxal 5'-phosphate. The resulting ammonia molecule is channeled to the active site of PdxS. This is Pyridoxal 5'-phosphate synthase subunit PdxT from Dehalococcoides mccartyi (strain CBDB1).